We begin with the raw amino-acid sequence, 85 residues long: uncharacterized protein (85 aa).

The next 2 helical transmembrane spans lie at 13–35 and 59–81; these read KWLAVAICLAMVGMAVMPAFQPL and EGIVITATLAAAAATAELVHLLL.

The protein resides in the cell membrane. This is an uncharacterized protein from Archaeoglobus fulgidus (strain ATCC 49558 / DSM 4304 / JCM 9628 / NBRC 100126 / VC-16).